The chain runs to 269 residues: MVWFFEYYDGCGLAIKVKKKLYEAEGVQKVEIYETESMGKMLVIDGKIQLTELDEPFYHEMLVHVPMLSHENPRKVAVIGGGDGGALREVLKHNVERAVLVDIDRNVIDLSRKFLKIDHGAFEDERVEIAIMDGKEFLRDCEIFDVIIVDSTDPVGVSDTLFDREFFELARQKCDVISLQSQSPLIQKEYFRTLLVNSAPFERRDVYLSCVPTYPLALWSFIIGGEYDFSNLEERFERIKGKTVHYNPDVHRAAFALPEWLKKEVEACI.

The PABS domain maps to 1–226 (MVWFFEYYDG…ALWSFIIGGE (226 aa)). Gln-28 is an S-methyl-5'-thioadenosine binding site. Residues His-59 and Asp-83 each contribute to the spermidine site. Residues Asp-102 and 133–134 (DG) contribute to the S-methyl-5'-thioadenosine site. The active-site Proton acceptor is Asp-150. 150–153 (DSTD) lines the spermidine pocket.

The protein belongs to the spermidine/spermine synthase family. In terms of assembly, homodimer or homotetramer.

The protein resides in the cytoplasm. It catalyses the reaction S-adenosyl 3-(methylsulfanyl)propylamine + putrescine = S-methyl-5'-thioadenosine + spermidine + H(+). It participates in amine and polyamine biosynthesis; spermidine biosynthesis; spermidine from putrescine: step 1/1. In terms of biological role, catalyzes the irreversible transfer of a propylamine group from the amino donor S-adenosylmethioninamine (decarboxy-AdoMet) to putrescine (1,4-diaminobutane) to yield spermidine. This chain is Polyamine aminopropyltransferase, found in Archaeoglobus fulgidus (strain ATCC 49558 / DSM 4304 / JCM 9628 / NBRC 100126 / VC-16).